The chain runs to 115 residues: MNLINIIENSQKKSNITKLFSGDIVKINIWVLEGNKKRIQIFEGIIIAIKNKGISSSITVRKISNGEGVERMFPLHSPIIESIIVNRHSLVRKSKLYYLRNKKGRSSRIKQRLKK.

This sequence belongs to the bacterial ribosomal protein bL19 family.

Functionally, this protein is located at the 30S-50S ribosomal subunit interface and may play a role in the structure and function of the aminoacyl-tRNA binding site. The polypeptide is Large ribosomal subunit protein bL19 (Wigglesworthia glossinidia brevipalpis).